Reading from the N-terminus, the 125-residue chain is Small ribosomal subunit protein uS12c (125 aa).

Belongs to the universal ribosomal protein uS12 family. In terms of assembly, part of the 30S ribosomal subunit.

Its subcellular location is the plastid. The protein resides in the chloroplast. In terms of biological role, with S4 and S5 plays an important role in translational accuracy. Located at the interface of the 30S and 50S subunits. The sequence is that of Small ribosomal subunit protein uS12c (rps12) from Oltmannsiellopsis viridis (Marine flagellate).